Reading from the N-terminus, the 236-residue chain is Eukaryotic translation initiation factor 3 subunit K (236 aa).

A PCI domain is found at 42–222; sequence YDKDILVTTL…TIKSRNIEEK (181 aa).

This sequence belongs to the eIF-3 subunit K family. Component of the eukaryotic translation initiation factor 3 (eIF-3) complex.

Its subcellular location is the cytoplasm. In terms of biological role, component of the eukaryotic translation initiation factor 3 (eIF-3) complex, which is involved in protein synthesis of a specialized repertoire of mRNAs and, together with other initiation factors, stimulates binding of mRNA and methionyl-tRNAi to the 40S ribosome. The eIF-3 complex specifically targets and initiates translation of a subset of mRNAs involved in cell proliferation. The protein is Eukaryotic translation initiation factor 3 subunit K of Brugia malayi (Filarial nematode worm).